Consider the following 385-residue polypeptide: Probable peptidoglycan glycosyltransferase FtsW (385 aa).

9 consecutive transmembrane segments (helical) span residues 18-38, 57-77, 81-101, 111-131, 157-177, 195-215, 280-300, 311-331, and 347-367; these read LLWTAILLALAGLVMVSSASL, IYLALGLGVGAFVYYAVPLAL, LRFVMLPVALVALVMVFIPGL, WIALPGLTIQASEIVKLCFVL, LLGVLMLLLLLEPDFGAVVVL, FLLIGLIAVALGGLVAFAEPY, LGLLGNVALIGGFILLGWRVF, LLYHAYLVYGCAFVFCSQAFI, and LPFISYGGSSLLISAVMVGLI.

Belongs to the SEDS family. FtsW subfamily.

Its subcellular location is the cell inner membrane. It catalyses the reaction [GlcNAc-(1-&gt;4)-Mur2Ac(oyl-L-Ala-gamma-D-Glu-L-Lys-D-Ala-D-Ala)](n)-di-trans,octa-cis-undecaprenyl diphosphate + beta-D-GlcNAc-(1-&gt;4)-Mur2Ac(oyl-L-Ala-gamma-D-Glu-L-Lys-D-Ala-D-Ala)-di-trans,octa-cis-undecaprenyl diphosphate = [GlcNAc-(1-&gt;4)-Mur2Ac(oyl-L-Ala-gamma-D-Glu-L-Lys-D-Ala-D-Ala)](n+1)-di-trans,octa-cis-undecaprenyl diphosphate + di-trans,octa-cis-undecaprenyl diphosphate + H(+). The protein operates within cell wall biogenesis; peptidoglycan biosynthesis. In terms of biological role, peptidoglycan polymerase that is essential for cell division. The protein is Probable peptidoglycan glycosyltransferase FtsW of Alcanivorax borkumensis (strain ATCC 700651 / DSM 11573 / NCIMB 13689 / SK2).